Reading from the N-terminus, the 540-residue chain is Lysosomal cobalamin transport escort protein LMBD1 (540 aa).

Residues 1–10 (MATPGAASAE) are Extracellular-facing. The helical transmembrane segment at 11–31 (LVIGWCIFGLLLLAILAFCWI) threads the bilayer. Residues 32–50 (YVRKYQSRRESEVVSTITA) are Cytoplasmic-facing. The helical transmembrane segment at 51 to 71 (IFSLAIALITSALLPVDIFLV) threads the bilayer. At 72–100 (SYMKNQNGTFKDWANANVSRQIEDTVLYG) the chain is on the extracellular side. Residues Asn-78 and Asn-88 are each glycosylated (N-linked (GlcNAc...) asparagine). The helical transmembrane segment at 101–121 (YYTLYSVILFCVFFWIPFVYF) threads the bilayer. At 122 to 144 (YYEEKDDDDTSKCTQIKTALKYT) the chain is on the cytoplasmic side. The chain crosses the membrane as a helical span at residues 145-165 (LGFVVICALLLLVGAFVPLNV). At 166 to 188 (PNNKNSTEWEKVKFLFEELGSSH) the chain is on the extracellular side. Residue Asn-170 is glycosylated (N-linked (GlcNAc...) asparagine). A helical transmembrane segment spans residues 189–209 (GLAALSFSISSLTLIGMLAAI). Residues 210 to 305 (TYTAYGMSAL…KFCGALRPLK (96 aa)) lie on the Cytoplasmic side of the membrane. The YERL motif; mediates interaction with adapter protein complex 2 and is essential for its function in clathrin-mediated endocytosis of INSR motif lies at 232–235 (YERL). At Thr-238 the chain carries Phosphothreonine. The WTKF motif; mediates interaction with adapter protein complex 2 and is essential for its function in clathrin-mediated endocytosis of INSR motif lies at 294 to 297 (WTKF). A helical membrane pass occupies residues 306–326 (IIWGIFFILVALLFVISLFLS). Residues 327–364 (NLDKALHSAGIDSGFIIFGANLSNPLNMLLPLLQTVFP) lie on the Extracellular side of the membrane. An N-linked (GlcNAc...) asparagine glycan is attached at Asn-347. A helical membrane pass occupies residues 365 to 385 (LDYILITIIIMYFIFTSMAGI). Residues 386–408 (RNIGIWFFWIRLYKIRRGRTRPQ) are Cytoplasmic-facing. A helical membrane pass occupies residues 409–429 (ALLFLCMILLLIVLHTSYMIY). Residues 430–486 (SLAPQYVMYGSQNYLIETNITSDNHKGNSTLSVPKRCDADAPEDQCTVTRTYLFLHK) are Extracellular-facing. Residues Asn-448 and Asn-457 are each glycosylated (N-linked (GlcNAc...) asparagine). A helical transmembrane segment spans residues 487–507 (FWFFSAAYYFGNWAFLGVFLI). The Cytoplasmic segment spans residues 508-540 (GLIVSCCKGKKSVIEGVDEDSDISDDEPSVYSV). Phosphoserine occurs at positions 528 and 531.

It belongs to the LIMR family. LMBRD1 subfamily. In terms of assembly, interacts with ABCD4; this interaction induces the translocation of ABCD4 from the endoplasmic reticulum to the lysosome. Interacts with ABCD4 and MMACHC; this interaction ensures the transport of cobalamin from the lysosome to the cytoplasm. Interacts with INSR, adapter protein complex 2 and clathrin heavy chain. Post-translationally, N-glycosylated.

Its subcellular location is the lysosome membrane. It is found in the cell membrane. It localises to the cytoplasmic vesicle. The protein localises to the clathrin-coated vesicle. Lysosomal membrane chaperone required to export cobalamin (vitamin B12) from lysosome to the cytosol, allowing its conversion to cofactors. Targets ABCD4 transporter from the endoplasmic reticulum to the lysosomal membrane. Then forms a complex with lysosomal transporter ABCD4 and cytoplasmic MMACHC to transport cobalamin across the lysosomal membrane. Acts as an adapter protein which plays an important role in mediating and regulating the internalization of the insulin receptor (INSR). Involved in clathrin-mediated endocytosis of INSR via its interaction with adapter protein complex 2. Essential for the initiation of gastrulation and early formation of mesoderm structures during embryogenesis. This Macaca fascicularis (Crab-eating macaque) protein is Lysosomal cobalamin transport escort protein LMBD1 (LMBRD1).